The following is a 363-amino-acid chain: S-adenosylmethionine:tRNA ribosyltransferase-isomerase (363 aa).

Belongs to the QueA family. Monomer.

Its subcellular location is the cytoplasm. The catalysed reaction is 7-aminomethyl-7-carbaguanosine(34) in tRNA + S-adenosyl-L-methionine = epoxyqueuosine(34) in tRNA + adenine + L-methionine + 2 H(+). It participates in tRNA modification; tRNA-queuosine biosynthesis. Functionally, transfers and isomerizes the ribose moiety from AdoMet to the 7-aminomethyl group of 7-deazaguanine (preQ1-tRNA) to give epoxyqueuosine (oQ-tRNA). The polypeptide is S-adenosylmethionine:tRNA ribosyltransferase-isomerase (Brucella melitensis biotype 2 (strain ATCC 23457)).